A 357-amino-acid polypeptide reads, in one-letter code: MAAPVQTIDVLLAEHADLERALADPELHSRPDEARKAGRRFARLAPIVATYRKLVAAREDLETAHELAATDESFAAEAAELEARVAELDSQLTDMLAPRDPHDADDIVLEVKSGEGGEESALFAADLARMYIRYAERHGWTVTVLGETTSDLGGYKDATLAIASKGDTADGVWSRMKFEGGVHRVQRVPVTESQGRVHTSAAGVLVYPEPEEVGEVQIDESDLRIDVYRSSGKGGQGVNTTDSAVRITHLPTGIVVTCQNERSQLQNKIRAMQVLGARLQAIAEEQAMADASADRASQIRTVDRSERIRTYNFPENRITDHRIGYKSHNLDQVLDGDLDALFDALAAADKQARLQQP.

Gln-236 bears the N5-methylglutamine mark.

This sequence belongs to the prokaryotic/mitochondrial release factor family. Methylated by PrmC. Methylation increases the termination efficiency of RF1.

It localises to the cytoplasm. Functionally, peptide chain release factor 1 directs the termination of translation in response to the peptide chain termination codons UAG and UAA. The polypeptide is Peptide chain release factor 1 (Mycobacterium marinum (strain ATCC BAA-535 / M)).